A 310-amino-acid polypeptide reads, in one-letter code: Aspartate carbamoyltransferase catalytic subunit (310 aa).

Positions 59 and 60 each coordinate carbamoyl phosphate. K87 provides a ligand contact to L-aspartate. Residues R109, H139, and Q142 each coordinate carbamoyl phosphate. The L-aspartate site is built by R172 and R224. A265 and P266 together coordinate carbamoyl phosphate.

This sequence belongs to the aspartate/ornithine carbamoyltransferase superfamily. ATCase family. As to quaternary structure, heterododecamer (2C3:3R2) of six catalytic PyrB chains organized as two trimers (C3), and six regulatory PyrI chains organized as three dimers (R2).

It catalyses the reaction carbamoyl phosphate + L-aspartate = N-carbamoyl-L-aspartate + phosphate + H(+). It participates in pyrimidine metabolism; UMP biosynthesis via de novo pathway; (S)-dihydroorotate from bicarbonate: step 2/3. Catalyzes the condensation of carbamoyl phosphate and aspartate to form carbamoyl aspartate and inorganic phosphate, the committed step in the de novo pyrimidine nucleotide biosynthesis pathway. The chain is Aspartate carbamoyltransferase catalytic subunit from Lactococcus lactis subsp. cremoris (strain MG1363).